A 142-amino-acid chain; its full sequence is Hemoglobin subunit alpha (142 aa).

The 141-residue stretch at 2–142 (VLSDADKTHV…VATVLTSKYR (141 aa)) folds into the Globin domain. The residue at position 4 (S4) is a Phosphoserine. K8 is subject to N6-succinyllysine. A Phosphothreonine modification is found at T9. N6-succinyllysine is present on K12. Residue K17 is modified to N6-acetyllysine; alternate. At K17 the chain carries N6-succinyllysine; alternate. The residue at position 25 (Y25) is a Phosphotyrosine. S36 bears the Phosphoserine mark. The residue at position 41 (K41) is an N6-succinyllysine. Residue S50 is modified to Phosphoserine. H59 lines the O2 pocket. H88 provides a ligand contact to heme b. S103 carries the phosphoserine modification. A Phosphothreonine modification is found at T109. 2 positions are modified to phosphoserine: S125 and S132. Phosphothreonine occurs at positions 135 and 138. Phosphoserine is present on S139.

This sequence belongs to the globin family. In terms of assembly, heterotetramer of two alpha chains and two beta chains. As to expression, red blood cells.

Involved in oxygen transport from the lung to the various peripheral tissues. Functionally, hemopressin acts as an antagonist peptide of the cannabinoid receptor CNR1. Hemopressin-binding efficiently blocks cannabinoid receptor CNR1 and subsequent signaling. The sequence is that of Hemoglobin subunit alpha (HBA) from Dasyurus viverrinus (Eastern quoll).